Reading from the N-terminus, the 147-residue chain is uncharacterized protein (147 aa).

This sequence to M.jannaschii MJ1086 N-terminal region.

This is an uncharacterized protein from Methanocaldococcus jannaschii (strain ATCC 43067 / DSM 2661 / JAL-1 / JCM 10045 / NBRC 100440) (Methanococcus jannaschii).